A 943-amino-acid chain; its full sequence is Isoleucine--tRNA ligase (943 aa).

The short motif at 58 to 68 (PYANGSIHIGH) is the 'HIGH' region element. Glu567 contacts L-isoleucyl-5'-AMP. The 'KMSKS' region motif lies at 608 to 612 (KMSKS). Lys611 provides a ligand contact to ATP. Zn(2+) contacts are provided by Cys906, Cys909, Cys926, and Cys929.

This sequence belongs to the class-I aminoacyl-tRNA synthetase family. IleS type 1 subfamily. Monomer. Zn(2+) serves as cofactor.

It is found in the cytoplasm. It carries out the reaction tRNA(Ile) + L-isoleucine + ATP = L-isoleucyl-tRNA(Ile) + AMP + diphosphate. Catalyzes the attachment of isoleucine to tRNA(Ile). As IleRS can inadvertently accommodate and process structurally similar amino acids such as valine, to avoid such errors it has two additional distinct tRNA(Ile)-dependent editing activities. One activity is designated as 'pretransfer' editing and involves the hydrolysis of activated Val-AMP. The other activity is designated 'posttransfer' editing and involves deacylation of mischarged Val-tRNA(Ile). The sequence is that of Isoleucine--tRNA ligase from Pseudomonas aeruginosa (strain ATCC 15692 / DSM 22644 / CIP 104116 / JCM 14847 / LMG 12228 / 1C / PRS 101 / PAO1).